The sequence spans 946 residues: Glucoamylase 1 (946 aa).

The signal sequence occupies residues 1-20; it reads MKLLSKVFVTALGLTSIVNA. 9 N-linked (GlcNAc...) asparagine glycosylation sites follow: asparagine 51, asparagine 68, asparagine 97, asparagine 187, asparagine 244, asparagine 373, asparagine 393, asparagine 406, and asparagine 437. Active-site residues include aspartate 462 and glutamate 465. Asparagine 505 carries N-linked (GlcNAc...) asparagine glycosylation. The span at 517–532 shows a compositional bias: low complexity; it reads AATKTTTTTSSSTSTS. The segment at 517 to 541 is disordered; sequence AATKTTTTTSSSTSTSIDGKNTLAP. N-linked (GlcNAc...) asparagine glycosylation occurs at asparagine 570. Aspartate 628 serves as the catalytic Proton donor. N-linked (GlcNAc...) asparagine glycosylation is found at asparagine 704, asparagine 772, asparagine 801, asparagine 895, and asparagine 912.

The protein belongs to the glycosyl hydrolase 31 family. The N-terminus is blocked.

Its subcellular location is the secreted. The protein resides in the cell wall. It is found in the membrane. It carries out the reaction Hydrolysis of terminal (1-&gt;4)-linked alpha-D-glucose residues successively from non-reducing ends of the chains with release of beta-D-glucose.. This chain is Glucoamylase 1 (GAM1), found in Candida albicans (strain SC5314 / ATCC MYA-2876) (Yeast).